The chain runs to 238 residues: MRFRNRFQRFMNHRAPANGRYKPTCYEHAANCYTHAFLIVPAIVGSALLHRLSDDCWEKITAWIYGMGLCALFIVSTVFHIVSWKKSHLRTVEHCFHMCDRMVIYFFIAASYAPWLNLRELGPLASHMRWFIWLMAAGGTIYVFLYHEKYKVVELFFYLTMGFSPALVVTSMNNTDGLQELACGGLIYCLGVVFFKSDGIIPFAHAIWHLFVATAAAVHYYAIWKYLYRSPTDFIRHL.

The Cytoplasmic segment spans residues 1–28 (MRFRNRFQRFMNHRAPANGRYKPTCYEH). Residues 29–49 (AANCYTHAFLIVPAIVGSALL) traverse the membrane as a helical segment. Over 50 to 61 (HRLSDDCWEKIT) the chain is Lumenal. Residues 62–82 (AWIYGMGLCALFIVSTVFHIV) traverse the membrane as a helical segment. Residues 83–101 (SWKKSHLRTVEHCFHMCDR) lie on the Cytoplasmic side of the membrane. A helical transmembrane segment spans residues 102-122 (MVIYFFIAASYAPWLNLRELG). Position 123 (Pro123) is a topological domain, lumenal. A helical transmembrane segment spans residues 124-144 (LASHMRWFIWLMAAGGTIYVF). Residues 145–151 (LYHEKYK) lie on the Cytoplasmic side of the membrane. Residues 152 to 172 (VVELFFYLTMGFSPALVVTSM) form a helical membrane-spanning segment. Residues 173 to 174 (NN) are Lumenal-facing. Residues 175 to 195 (TDGLQELACGGLIYCLGVVFF) form a helical membrane-spanning segment. At 196–198 (KSD) the chain is on the cytoplasmic side. A helical membrane pass occupies residues 199–219 (GIIPFAHAIWHLFVATAAAVH). The Lumenal portion of the chain corresponds to 220–238 (YYAIWKYLYRSPTDFIRHL).

Belongs to the ADIPOR family.

Its subcellular location is the late endosome membrane. It is found in the lysosome membrane. Involved in the dynamics of lysosomal membranes associated with microglial activation following brain lesion. The sequence is that of Monocyte to macrophage differentiation factor from Mus musculus (Mouse).